A 295-amino-acid polypeptide reads, in one-letter code: HTH-type transcriptional regulator ShiR (295 aa).

The HTH lysR-type domain maps to 1–58; the sequence is MEIRWLEGFIAVAEELHFSNAAIRLGMPQSPLSQLIRRLESELGQKLFDRSTRSVELT. A DNA-binding region (H-T-H motif) is located at residues 18–37; that stretch reads FSNAAIRLGMPQSPLSQLIR.

It belongs to the LysR transcriptional regulatory family.

Its function is as follows. Activates expression of the shikimate transporter ShiA in the presence of shikimate. Binds to the shiA promoter region. The chain is HTH-type transcriptional regulator ShiR from Corynebacterium glutamicum (strain R).